The sequence spans 411 residues: Na(+)/H(+) antiporter NhaA 2 (411 aa).

A run of 10 helical transmembrane segments spans residues Val-18 to Val-38, Leu-59 to Leu-79, Leu-97 to Ile-117, Gly-127 to Gly-147, Leu-167 to Leu-187, Trp-218 to Leu-238, Pro-261 to Ser-281, Val-297 to Ile-317, Val-338 to Ile-358, and Ile-366 to Leu-386.

Belongs to the NhaA Na(+)/H(+) (TC 2.A.33) antiporter family.

It localises to the cell membrane. The catalysed reaction is Na(+)(in) + 2 H(+)(out) = Na(+)(out) + 2 H(+)(in). Its function is as follows. Na(+)/H(+) antiporter that extrudes sodium in exchange for external protons. In Rhodococcus jostii (strain RHA1), this protein is Na(+)/H(+) antiporter NhaA 2.